The chain runs to 200 residues: MYEYIKGTLTHINESYVVIESFGIGYAIMLSERFLVDLRAFMHQEVLIYVHSVIRETEHVLYGFSSRAERECFRLLISFSGIGPKTGLSILNMFPLQELCSIARLENVKAIASVPGIGKKTAEKLMVDLKQKLPTLMPLYLEEPVVPSSTANSSFKEGIGALMNLGFSRLAADRMMTEAVKELSEEASVAELLPIALRKS.

Residues Met-1 to Ser-65 are domain I. The interval Ser-66–Pro-144 is domain II. The segment at Val-145–Ser-149 is flexible linker. The domain III stretch occupies residues Thr-150–Ser-200.

This sequence belongs to the RuvA family. As to quaternary structure, homotetramer. Forms an RuvA(8)-RuvB(12)-Holliday junction (HJ) complex. HJ DNA is sandwiched between 2 RuvA tetramers; dsDNA enters through RuvA and exits via RuvB. An RuvB hexamer assembles on each DNA strand where it exits the tetramer. Each RuvB hexamer is contacted by two RuvA subunits (via domain III) on 2 adjacent RuvB subunits; this complex drives branch migration. In the full resolvosome a probable DNA-RuvA(4)-RuvB(12)-RuvC(2) complex forms which resolves the HJ.

It localises to the cytoplasm. The RuvA-RuvB-RuvC complex processes Holliday junction (HJ) DNA during genetic recombination and DNA repair, while the RuvA-RuvB complex plays an important role in the rescue of blocked DNA replication forks via replication fork reversal (RFR). RuvA specifically binds to HJ cruciform DNA, conferring on it an open structure. The RuvB hexamer acts as an ATP-dependent pump, pulling dsDNA into and through the RuvAB complex. HJ branch migration allows RuvC to scan DNA until it finds its consensus sequence, where it cleaves and resolves the cruciform DNA. This Chlamydia trachomatis serovar D (strain ATCC VR-885 / DSM 19411 / UW-3/Cx) protein is Holliday junction branch migration complex subunit RuvA.